We begin with the raw amino-acid sequence, 103 residues long: Somatostatin-2 (103 aa).

Residues M1 to S21 form the signal peptide. Positions Q22 to E87 are excised as a propeptide. Residues C92 and C103 are joined by a disulfide bond.

Belongs to the somatostatin family.

It is found in the secreted. Its function is as follows. Somatostatin inhibits the release of somatotropin. The polypeptide is Somatostatin-2 (sst2) (Pelophylax ridibundus (Marsh frog)).